The sequence spans 202 residues: MSRYRGPRVRIIRRLGTLPGLTNKTPQLKSGSINQSTSNKKISQYRIRLEEKQKLRFHYGITERQLLNYVRIARRAKGSTGEVLLQLLEMRLDNVIFRLGMAPTIPGARQLVNHRHILVNDYIVDIPSYRCKPQDFITIKNQQKSETIISKNIEFYQKYKIPNHLTYSSLEKKGLVNQILDRESIGLKINELLVVEYYSRQA.

Positions 90 to 153 (MRLDNVIFRL…KSETIISKNI (64 aa)) constitute an S4 RNA-binding domain.

This sequence belongs to the universal ribosomal protein uS4 family. Part of the 30S ribosomal subunit. Contacts protein S5. The interaction surface between S4 and S5 is involved in control of translational fidelity.

The protein resides in the plastid. It localises to the chloroplast. Its function is as follows. One of the primary rRNA binding proteins, it binds directly to 16S rRNA where it nucleates assembly of the body of the 30S subunit. Functionally, with S5 and S12 plays an important role in translational accuracy. This chain is Small ribosomal subunit protein uS4c (rps4), found in Hylocomium splendens (Glittering wood-moss).